The sequence spans 136 residues: Small ribosomal subunit protein eS12 (136 aa).

The protein belongs to the eukaryotic ribosomal protein eS12 family.

This is Small ribosomal subunit protein eS12 (rps12) from Dictyostelium discoideum (Social amoeba).